Here is a 756-residue protein sequence, read N- to C-terminus: Membrane-anchored protein 1 (756 aa).

The first 24 residues, 1 to 24, serve as a signal peptide directing secretion; that stretch reads MIRNTLAFLAILFLLIPTALLIIG. N-linked (GlcNAc...) asparagine glycans are attached at residues Asn52 and Asn64. 3 helical membrane-spanning segments follow: residues 91 to 111, 120 to 140, and 148 to 168; these read IISAFLSFLSAIFVFFSIFLV, IIVVFITTLLTCLAFAIELVL, and QSYVTAGAIGSDLIAILALCL. Asn190 carries an N-linked (GlcNAc...) asparagine glycan. The segment at 281 to 328 is disordered; that stretch reads YDEFRKSESSPSRSSVLSTSKPEVHETEGYCPHKTGNRPGFPSLNIPR. Positions 289 to 300 are enriched in low complexity; that stretch reads SSPSRSSVLSTS. 2 N-linked (GlcNAc...) asparagine glycosylation sites follow: Asn396 and Asn407. A disordered region spans residues 427–453; sequence EPPATRMPQTRSPVNDHSSFPSDLPIK. The segment covering 433-447 has biased composition (polar residues); the sequence is MPQTRSPVNDHSSFP. A Phosphoserine modification is found at Ser438. Residues Asn459, Asn470, Asn471, Asn496, Asn497, Asn521, Asn522, Asn547, Asn548, Asn573, Asn574, Asn594, Asn598, Asn599, Asn618, Asn623, Asn649, Asn664, Asn676, and Asn685 are each glycosylated (N-linked (GlcNAc...) asparagine). Residues 482–650 are disordered; the sequence is MLKNVGNGPR…MPTSPNSRNN (169 aa). Positions 485-520 are enriched in low complexity; sequence NVGNGPRNAPRNNSSNNLHAQGGMPMNMRGPRGAPR. Composition is skewed to polar residues over residues 593–605, 617–629, and 640–650; these read RNTSRNNSSSEFN, RNASRSNSSTDLF, and GMPTSPNSRNN. The span at 686 to 697 shows a compositional bias: polar residues; it reads GSRNPSHGSLNT. The tract at residues 686–713 is disordered; sequence GSRNPSHGSLNTAHAGMGYGPRSMMRDP. An N-linked (GlcNAc...) asparagine glycan is attached at Asn715. Positions 735–756 are disordered; it reads FELPVRGNRNNRRGPGGNRMIR.

It to yeast YOL019W and YMR063W.

It is found in the cell membrane. The protein resides in the cell tip. Functionally, required for correct cell separation at high temperatures. The protein is Membrane-anchored protein 1 (mac1) of Schizosaccharomyces pombe (strain 972 / ATCC 24843) (Fission yeast).